The chain runs to 482 residues: Lipoamide acyltransferase component of branched-chain alpha-keto acid dehydrogenase complex, mitochondrial (482 aa).

Residues methionine 1–arginine 61 constitute a mitochondrion transit peptide. The region spanning valine 64–glutamate 139 is the Lipoyl-binding domain. Lysine 105 is subject to N6-lipoyllysine. At lysine 133 the chain carries N6-succinyllysine. A critical for association with PPM1K region spans residues aspartate 145–glutamate 160. Residues glutamate 147–glycine 168 form a disordered region. The segment covering serine 157–glycine 168 has biased composition (basic and acidic residues). Residues leucine 172 to leucine 209 enclose the Peripheral subunit-binding (PSBD) domain. Lysine 196 carries the post-translational modification N6-acetyllysine; alternate. N6-succinyllysine; alternate is present on lysine 196. The residue at position 202 (lysine 202) is an N6-acetyllysine. A Phosphoserine modification is found at serine 220. An N6-acetyllysine mark is found at lysine 243 and lysine 250. Lysine 261 carries the post-translational modification N6-succinyllysine. Lysine 289 is modified (N6-acetyllysine; alternate). At lysine 289 the chain carries N6-succinyllysine; alternate. Arginine 291 lines the CoA pocket. N6-acetyllysine occurs at positions 295 and 304. Residues serine 306, aspartate 349, glutamine 378, serine 399, asparagine 400, serine 403, glycine 424, and isoleucine 426 each contribute to the CoA site. Lysine 435 is subject to N6-acetyllysine. Position 440 is an N6-acetyllysine; alternate (lysine 440). Lysine 440 carries the N6-succinyllysine; alternate modification. Catalysis depends on residues histidine 452 and aspartate 456.

The protein belongs to the 2-oxoacid dehydrogenase family. In terms of assembly, forms a 24-polypeptide structural core with octahedral symmetry that represents the E2 component of the branched-chain alpha-ketoacid dehydrogenase (BCKDH) complex. The BCKDH complex is composed of three major building blocks E1, E2 and E3. It is organized around E2, a 24-meric cubic core composed of DBT, to which are associated 6 to 12 copies of E1, and approximately 6 copies of the dehydrogenase E3, a DLD dimer. Interacts with PPM1K with a 24:1 stoichiometry; the N-terminal region (residues 49-61) of PPM1K and C-terminal linker of the lipoyl domain of DBT/E2 (residues 145-160) are critical for this interaction whereas the lipoyl prosthetic group is dispensable. This interaction requires colocalization in mitochondria. PPM1K competes with BCKDK for binding to DBT; this interaction is modulated by branched-chain alpha-keto acids (BCKAs). At steady state, BCKDH holoenzyme preferentially binds BCKDK and BCKDHA is phosphorylated. In response to high levels of BCKAs, BCKDK is replaced by PPM1K leading to BCKDHA dephosphorylation. Requires (R)-lipoate as cofactor.

It is found in the mitochondrion matrix. It catalyses the reaction N(6)-[(R)-dihydrolipoyl]-L-lysyl-[protein] + 2-methylpropanoyl-CoA = N(6)-[(R)-S(8)-2-methylpropanoyldihydrolipoyl]-L-lysyl-[protein] + CoA. Functionally, the branched-chain alpha-keto dehydrogenase complex catalyzes the overall conversion of alpha-keto acids to acyl-CoA and CO(2). It contains multiple copies of three enzymatic components: branched-chain alpha-keto acid decarboxylase (E1), lipoamide acyltransferase (E2) and lipoamide dehydrogenase (E3). Within this complex, the catalytic function of this enzyme is to accept, and to transfer to coenzyme A, acyl groups that are generated by the branched-chain alpha-keto acid decarboxylase component. This is Lipoamide acyltransferase component of branched-chain alpha-keto acid dehydrogenase complex, mitochondrial from Homo sapiens (Human).